The sequence spans 705 residues: Zinc finger protein 770 (705 aa).

A Glycyl lysine isopeptide (Lys-Gly) (interchain with G-Cter in SUMO2) cross-link involves residue Lys16. C2H2-type zinc fingers lie at residues 31 to 53 (YICN…YLIH), 59 to 81 (FECD…QLTH), and 85 to 107 (FSCN…QQLH). Residues Lys116, Lys124, and Lys149 each participate in a glycyl lysine isopeptide (Lys-Gly) (interchain with G-Cter in SUMO2) cross-link. 3 C2H2-type zinc fingers span residues 164–186 (HACT…SLIH), 192–214 (FKCV…QLTH), and 220–242 (FQCC…KQIH). Residue Lys266 forms a Glycyl lysine isopeptide (Lys-Gly) (interchain with G-Cter in SUMO2) linkage. The C2H2-type 7; degenerate zinc finger occupies 298–322 (FQCSECEECFESEQILNGHKCLPAR). 4 consecutive C2H2-type zinc fingers follow at residues 485-507 (CPCD…YLIH), 513-535 (FDCN…KLTH), 640-662 (YQCS…YLIH), and 668-690 (FECS…QLTH). Lys698 participates in a covalent cross-link: Glycyl lysine isopeptide (Lys-Gly) (interchain with G-Cter in SUMO2).

This sequence belongs to the krueppel C2H2-type zinc-finger protein family.

It is found in the nucleus. May be involved in transcriptional regulation. This Mus musculus (Mouse) protein is Zinc finger protein 770 (Znf770).